Reading from the N-terminus, the 306-residue chain is tRNA dimethylallyltransferase (306 aa).

Position 11 to 18 (11 to 18) interacts with ATP; it reads APTAAGKT. Residue 13-18 coordinates substrate; the sequence is TAAGKT.

It belongs to the IPP transferase family. As to quaternary structure, monomer. The cofactor is Mg(2+).

It catalyses the reaction adenosine(37) in tRNA + dimethylallyl diphosphate = N(6)-dimethylallyladenosine(37) in tRNA + diphosphate. In terms of biological role, catalyzes the transfer of a dimethylallyl group onto the adenine at position 37 in tRNAs that read codons beginning with uridine, leading to the formation of N6-(dimethylallyl)adenosine (i(6)A). The protein is tRNA dimethylallyltransferase of Deinococcus radiodurans (strain ATCC 13939 / DSM 20539 / JCM 16871 / CCUG 27074 / LMG 4051 / NBRC 15346 / NCIMB 9279 / VKM B-1422 / R1).